Consider the following 380-residue polypeptide: Histidinol-phosphate aminotransferase (380 aa).

At Lys235 the chain carries N6-(pyridoxal phosphate)lysine.

Belongs to the class-II pyridoxal-phosphate-dependent aminotransferase family. Histidinol-phosphate aminotransferase subfamily. As to quaternary structure, homodimer. Pyridoxal 5'-phosphate is required as a cofactor.

The catalysed reaction is L-histidinol phosphate + 2-oxoglutarate = 3-(imidazol-4-yl)-2-oxopropyl phosphate + L-glutamate. It functions in the pathway amino-acid biosynthesis; L-histidine biosynthesis; L-histidine from 5-phospho-alpha-D-ribose 1-diphosphate: step 7/9. The chain is Histidinol-phosphate aminotransferase from Rhodococcus jostii (strain RHA1).